The sequence spans 264 residues: Undecaprenyl-diphosphatase (264 aa).

The next 8 membrane-spanning stretches (helical) occupy residues 7-27 (IVLA…SAHL), 41-61 (LIFD…YYQA), 89-109 (VLLG…FVAV), 114-134 (IEII…ASWF), 144-164 (TISW…LIPG), 186-206 (IQFS…LMLI), 219-239 (LLVL…IFVI), and 244-264 (MVGM…LFFL).

Belongs to the UppP family.

It is found in the cell inner membrane. It catalyses the reaction di-trans,octa-cis-undecaprenyl diphosphate + H2O = di-trans,octa-cis-undecaprenyl phosphate + phosphate + H(+). Catalyzes the dephosphorylation of undecaprenyl diphosphate (UPP). Confers resistance to bacitracin. The sequence is that of Undecaprenyl-diphosphatase from Vesicomyosocius okutanii subsp. Calyptogena okutanii (strain HA).